A 624-amino-acid polypeptide reads, in one-letter code: MNLEQLYDVIVVGGGHAGTEAALAAARLGVKTLLLTHNIDLLGQMSCNPAIGGIGKGHLVKEIDALDGAMAKAADQAGIQFRILNASKGPAVRATRAQADRVLYRKAIRTQLQSQANLTIFQQAVDDLKIEGGLVTGVVTQMGLTLKARAVVLTVGTFLGGKIHVGMNQYAGGRAGDPPSIALSKSLRDLDLPVGRLKTGTPPRIDRRTIDFSQMVEQPGDTPVPVFSYLGTASDHPQQVSCHITHTTEATHDIIRNNLDKSPMYAGVIEGVGPRYCPSIEDKIVRFADKTSHQIFVEPEGLTTEEIYPNGISTSLPFEVQVQFVRTIKGFENAHITRPGYAIEYDYFDPRGLTSFLQTKAIPNLFFAGQINGTTGYEEAAAQGIIAGMNAALQIKGQDLWCPRRDEAYIGVLIDDLITCGTQEPYRMFTSRAEYRLLLREDNADLRLTEKGRQLGLVGDERWDSFSKKREAIESTQALLHNSWVRVHHNDLFKEALLNPMQHDCRAAEFLKRPEINYRHLLMMDDLNLPELPQEITEQIEIQNKYAGYIDRQQQEIEKLRKHENTMLPETLDYNDVVGLSSEVIQKLNRIKPTSLAQAGRISGVTPAALSLLLVHLKKSRLPV.

FAD contacts are provided by residues 13 to 18 (GGGHAG), V125, and S180. Residue 273-287 (GPRYCPSIEDKIVRF) coordinates NAD(+). Q370 contacts FAD.

The protein belongs to the MnmG family. As to quaternary structure, homodimer. Heterotetramer of two MnmE and two MnmG subunits. Requires FAD as cofactor.

It localises to the cytoplasm. In terms of biological role, NAD-binding protein involved in the addition of a carboxymethylaminomethyl (cmnm) group at the wobble position (U34) of certain tRNAs, forming tRNA-cmnm(5)s(2)U34. The polypeptide is tRNA uridine 5-carboxymethylaminomethyl modification enzyme MnmG (Legionella pneumophila (strain Lens)).